The chain runs to 287 residues: Lactamase-like protein nscB (287 aa).

4 residues coordinate Zn(2+): histidine 62, histidine 64, aspartate 66, and histidine 67. Aspartate 66 serves as the catalytic Proton donor/acceptor.

The protein belongs to the metallo-beta-lactamase superfamily. Requires Zn(2+) as cofactor.

The protein operates within secondary metabolite biosynthesis. Functionally, lactamase-like protein; part of the gene cluster that mediates the biosynthesis of neosartoricin B, a prenylated anthracenone that probably exhibits T-cell antiproliferative activity, suggestive of a physiological role as an immunosuppressive agent. The non-reducing polyketide synthase nscA probably synthesizes and cyclizes the decaketide backbone. The hydrolase nscB then mediates the product release through hydrolysis followed by spontaneous decarboxylation. The prenyltransferase nscD catalyzes the addition of the dimethylallyl group to the aromatic C5. The FAD-dependent monooxygenase nscC is then responsible for the stereospecific hydroxylation at C2. Neosartoricin B can be converted into two additional compounds neosartoricins C and D. Neosartoricin C is a spirocyclic compound that is cyclized through the attack of C3 hydroxyl on C14, followed by dehydration. On the other hand, neosartoricin D is a further cyclized compound in which attack of C2 on C14 in neosartoricin C results in the formation of the acetal-containing dioxabicyclo-octanone ring. Both of these compounds are novel and possibly represent related metabolites of the gene cluster. The sequence is that of Lactamase-like protein nscB from Trichophyton verrucosum (strain HKI 0517).